The following is a 423-amino-acid chain: Gamma-glutamyl phosphate reductase (423 aa).

Belongs to the gamma-glutamyl phosphate reductase family.

The protein resides in the cytoplasm. The enzyme catalyses L-glutamate 5-semialdehyde + phosphate + NADP(+) = L-glutamyl 5-phosphate + NADPH + H(+). It functions in the pathway amino-acid biosynthesis; L-proline biosynthesis; L-glutamate 5-semialdehyde from L-glutamate: step 2/2. In terms of biological role, catalyzes the NADPH-dependent reduction of L-glutamate 5-phosphate into L-glutamate 5-semialdehyde and phosphate. The product spontaneously undergoes cyclization to form 1-pyrroline-5-carboxylate. The polypeptide is Gamma-glutamyl phosphate reductase (Paramagnetospirillum magneticum (strain ATCC 700264 / AMB-1) (Magnetospirillum magneticum)).